The chain runs to 600 residues: Adenine deaminase (600 aa).

This sequence belongs to the metallo-dependent hydrolases superfamily. Adenine deaminase family. It depends on Mn(2+) as a cofactor.

The enzyme catalyses adenine + H2O + H(+) = hypoxanthine + NH4(+). The polypeptide is Adenine deaminase (Chelativorans sp. (strain BNC1)).